The primary structure comprises 425 residues: Putative chloroquine resistance transporter (425 aa).

At 1 to 56 the chain is on the cytoplasmic side; it reads MTGIKKGKNKKKNMKNDDRYKELDSLITNGSEIGNNSGRSCVKRFFKIIGNEMKNN. The chain crosses the membrane as a helical span at residues 57–77; it reads VYVYLLSILYLCVCVMNKVFA. At 78–88 the chain is on the vacuolar side; sequence KRTLNKMGNYS. A glycan (N-linked (GlcNAc...) asparagine) is linked at Asn-86. Residues 89-109 form a helical membrane-spanning segment; it reads FVTSETHNIICIIVFQLLYFI. Residues 110-126 lie on the Cytoplasmic side of the membrane; sequence YRKTSSSSVYKNESQKN. The chain crosses the membrane as a helical span at residues 127 to 147; it reads FGWQFFLISLLDASTVIISMI. The Vacuolar portion of the chain corresponds to 148-157; the sequence is GLTRTTGNIQ. Residues 158–178 traverse the membrane as a helical segment; it reads SFIMQLIIPVNMYFWFMFLGY. Topologically, residues 179–181 are cytoplasmic; it reads RYH. Residues 182-202 traverse the membrane as a helical segment; sequence LFNYLGAFIILITIAVVETFL. The Vacuolar portion of the chain corresponds to 203–210; sequence SFETQGEN. Residues 211–231 form a helical membrane-spanning segment; sequence SIIFNLIMISAFNTLSFSNMT. Residues 232–249 are Cytoplasmic-facing; the sequence is REVVFKKHKINILRLNAM. Residues 250-270 traverse the membrane as a helical segment; the sequence is VVLFQFFTSLLVLPVYNIPFL. Residues 271-318 are Vacuolar-facing; that stretch reads KEIYMPFSEMSTNINNGLRCLFYGENTIVENCGVGMVKMCDNCEGAWK. 2 cysteine pairs are disulfide-bonded: Cys-290-Cys-313 and Cys-302-Cys-310. A helical transmembrane segment spans residues 319–339; the sequence is TFITFSFFNICDNLLACYIID. The Cytoplasmic portion of the chain corresponds to 340-347; it reads KFSTMTYT. Residues 348-368 form a helical membrane-spanning segment; sequence IVSCIQGPAITIAYYFKFLAG. The Vacuolar portion of the chain corresponds to 369-378; sequence DAVRKPRILD. The helical transmembrane segment at 379 to 399 threads the bilayer; the sequence is FLTLFGYLFGTIIYRIGNIIL. Over 400–425 the chain is Cytoplasmic; sequence EKKQVIKSQNSNDSEAELTSIETSRA.

Belongs to the CRT-like transporter family.

It is found in the vacuole membrane. Functionally, nutrient transporter. Involved in maintaining the osmotic homeostasis of the digestive vacuole. This chain is Putative chloroquine resistance transporter, found in Plasmodium berghei.